A 430-amino-acid chain; its full sequence is Adenylosuccinate synthetase (430 aa).

GTP is bound by residues 17–23 (GDEGKGK) and 45–47 (GHT). D18 serves as the catalytic Proton acceptor. Residues D18 and G45 each coordinate Mg(2+). IMP contacts are provided by residues 18-21 (DEGK), 43-46 (NAGH), T139, R153, N229, T244, and R308. The Proton donor role is filled by H46. 304–310 (TVTGRRR) lines the substrate pocket. GTP-binding positions include R310, 336 to 338 (KLD), and 418 to 420 (GVG).

Belongs to the adenylosuccinate synthetase family. Homodimer. Mg(2+) is required as a cofactor.

The protein resides in the cytoplasm. It carries out the reaction IMP + L-aspartate + GTP = N(6)-(1,2-dicarboxyethyl)-AMP + GDP + phosphate + 2 H(+). It functions in the pathway purine metabolism; AMP biosynthesis via de novo pathway; AMP from IMP: step 1/2. In terms of biological role, plays an important role in the de novo pathway and in the salvage pathway of purine nucleotide biosynthesis. Catalyzes the first committed step in the biosynthesis of AMP from IMP. The chain is Adenylosuccinate synthetase from Cryptococcus neoformans var. neoformans serotype D (strain B-3501A) (Filobasidiella neoformans).